A 307-amino-acid chain; its full sequence is Low-salt glycan biosynthesis hexosyltransferase Agl10 (307 aa).

The protein belongs to the glycosyltransferase 2 family.

It functions in the pathway protein modification; protein glycosylation. The protein operates within cell surface structure biogenesis; S-layer biogenesis. Its function is as follows. Hexosyltransferase involved in N-glycan biosynthetic pathway that takes place under low-salt conditions (1.75 M instead of 3.4 M). Participates in the formation of the tetrasaccharide present at 'Asn-532' of S-layer glycoprotein Csg, consisting of a sulfated hexose, 2 hexoses and rhamnose. Involved in the addition of final rhamnose (sugar 4) of the tetrasaccharide on the dolichol phosphate carrier. This chain is Low-salt glycan biosynthesis hexosyltransferase Agl10 (agl10), found in Haloferax volcanii (strain ATCC 29605 / DSM 3757 / JCM 8879 / NBRC 14742 / NCIMB 2012 / VKM B-1768 / DS2) (Halobacterium volcanii).